Here is a 116-residue protein sequence, read N- to C-terminus: MDKKTSRLRRALRARKKIQELGVNRLVVHRTPRHIYAQVISPEAQVLAAASTVEKTVKELLKSTGNVDAAKAVGKIVAERAIEKGVAIVAFDRSGFKYHGRVAALADAAREAGLKF.

This sequence belongs to the universal ribosomal protein uL18 family. As to quaternary structure, part of the 50S ribosomal subunit; part of the 5S rRNA/L5/L18/L25 subcomplex. Contacts the 5S and 23S rRNAs.

Its function is as follows. This is one of the proteins that bind and probably mediate the attachment of the 5S RNA into the large ribosomal subunit, where it forms part of the central protuberance. This Shewanella denitrificans (strain OS217 / ATCC BAA-1090 / DSM 15013) protein is Large ribosomal subunit protein uL18.